A 534-amino-acid chain; its full sequence is 2,3-bisphosphoglycerate-independent phosphoglycerate mutase (534 aa).

Residues aspartate 15 and serine 65 each contribute to the Mn(2+) site. Catalysis depends on serine 65, which acts as the Phosphoserine intermediate. Substrate is bound by residues histidine 126, 156–157 (RD), arginine 188, arginine 194, 260–263 (RPDR), and lysine 333. Positions 400, 404, 441, 442, and 459 each coordinate Mn(2+).

It belongs to the BPG-independent phosphoglycerate mutase family. Monomer. The cofactor is Mn(2+).

It catalyses the reaction (2R)-2-phosphoglycerate = (2R)-3-phosphoglycerate. It participates in carbohydrate degradation; glycolysis; pyruvate from D-glyceraldehyde 3-phosphate: step 3/5. Functionally, catalyzes the interconversion of 2-phosphoglycerate and 3-phosphoglycerate. This Acaryochloris marina (strain MBIC 11017) protein is 2,3-bisphosphoglycerate-independent phosphoglycerate mutase.